A 389-amino-acid polypeptide reads, in one-letter code: Na(+)/H(+) antiporter NhaA 1 (389 aa).

A run of 11 helical transmembrane segments spans residues 14–34 (AGGI…NSPL), 47–67 (FGMS…FLLI), 87–107 (IFPA…YVAF), 117–137 (GWAI…ALLG), 146–166 (VFLL…IALF), 171–191 (LSTL…MLNA), 197–217 (LIWY…SGVH), 252–272 (VAFA…LEGV), 280–300 (MLPL…IFTF), 321–341 (IFAV…ISSL), and 356–376 (LGIL…LHVS).

The protein belongs to the NhaA Na(+)/H(+) (TC 2.A.33) antiporter family.

The protein localises to the cell inner membrane. The enzyme catalyses Na(+)(in) + 2 H(+)(out) = Na(+)(out) + 2 H(+)(in). Functionally, na(+)/H(+) antiporter that extrudes sodium in exchange for external protons. The protein is Na(+)/H(+) antiporter NhaA 1 of Vibrio vulnificus (strain CMCP6).